A 210-amino-acid chain; its full sequence is Adenylate kinase isoenzyme 1 (210 aa).

ATP is bound at residue 30 to 35 (GSGKGT). Residues 50–79 (SSGDLLRDEVKSGSPRGAQLTAIMESGALV) are NMP. Residues Ser51, Arg56, 77–79 (ALV), 107–110 (GYPR), and Gln114 each bind AMP. Residues 144 to 154 (HRAQTSGRADD) form an LID region. Residue Arg145 coordinates ATP. AMP contacts are provided by Arg151 and Arg162. Gly190 provides a ligand contact to ATP.

This sequence belongs to the adenylate kinase family. AK1 subfamily. Monomer.

It is found in the cytoplasm. It carries out the reaction AMP + ATP = 2 ADP. Its function is as follows. Catalyzes the reversible transfer of the terminal phosphate group between ATP and AMP. Plays an important role in cellular energy homeostasis and in adenine nucleotide metabolism. The protein is Adenylate kinase isoenzyme 1 of Caenorhabditis elegans.